Consider the following 453-residue polypeptide: o-phthalyl amidase (453 aa).

In terms of assembly, monomer. The N-terminus is blocked.

It catalyses the reaction a phtalamide + H2O = phthalate + a primary amine. With respect to regulation, inhibited by iodoacetate, p-hydroxymercuric benzoate and copper ions. Catalyzes the removal of the phthalyl group from phthalyl amides generating phthalate and an amine. The enzyme has a broad substrate specificity and hydrolyzes phthalylated amino acids, peptides, beta-lactams, aromatic and aliphatic amines; substitutions allowed on the phthalyl group include 6-F, 6-NH(2), 3-OH, and a nitrogen in the aromatic ring ortho to the carboxy group attached to the amine. This is o-phthalyl amidase from Xanthobacter agilis.